The primary structure comprises 1315 residues: DNA-directed RNA polymerase subunit beta' (1315 aa).

Residues Cys-60, Cys-62, Cys-75, and Cys-78 each coordinate Zn(2+). Mg(2+) contacts are provided by Asp-535, Asp-537, and Asp-539. Zn(2+)-binding residues include Cys-890, Cys-967, Cys-974, and Cys-977.

It belongs to the RNA polymerase beta' chain family. In terms of assembly, the RNAP catalytic core consists of 2 alpha, 1 beta, 1 beta' and 1 omega subunit. When a sigma factor is associated with the core the holoenzyme is formed, which can initiate transcription. The cofactor is Mg(2+). Zn(2+) is required as a cofactor.

The catalysed reaction is RNA(n) + a ribonucleoside 5'-triphosphate = RNA(n+1) + diphosphate. In terms of biological role, DNA-dependent RNA polymerase catalyzes the transcription of DNA into RNA using the four ribonucleoside triphosphates as substrates. The sequence is that of DNA-directed RNA polymerase subunit beta' from Mycobacterium sp. (strain MCS).